Here is a 105-residue protein sequence, read N- to C-terminus: Large ribosomal subunit protein uL24 (105 aa).

This sequence belongs to the universal ribosomal protein uL24 family. In terms of assembly, part of the 50S ribosomal subunit.

Functionally, one of two assembly initiator proteins, it binds directly to the 5'-end of the 23S rRNA, where it nucleates assembly of the 50S subunit. In terms of biological role, one of the proteins that surrounds the polypeptide exit tunnel on the outside of the subunit. The chain is Large ribosomal subunit protein uL24 from Nitrosomonas europaea (strain ATCC 19718 / CIP 103999 / KCTC 2705 / NBRC 14298).